We begin with the raw amino-acid sequence, 368 residues long: Protein ALTERED XYLOGLUCAN 9 (368 aa).

Residues Met-1–Met-32 are Cytoplasmic-facing. The helical transmembrane segment at Leu-33–Phe-53 threads the bilayer. Residues Pro-54–Leu-368 are Lumenal-facing. Asn-99, Asn-137, and Asn-235 each carry an N-linked (GlcNAc...) asparagine glycan.

The protein localises to the golgi apparatus membrane. Its function is as follows. Component of the plant cell wall polysaccharide acetylation pathway. Does not directly catalyze O-acetylation of xyloglucan but exhibits weak acetylesterase activity in vitro. This chain is Protein ALTERED XYLOGLUCAN 9, found in Arabidopsis thaliana (Mouse-ear cress).